The primary structure comprises 377 residues: Homocitrate synthase 1 (377 aa).

The Pyruvate carboxyltransferase domain maps to 4 to 255; the sequence is VLINDTTLRD…DMGIDTPRLL (252 aa).

It belongs to the alpha-IPM synthase/homocitrate synthase family.

The enzyme catalyses acetyl-CoA + 2-oxoglutarate + H2O = (2R)-homocitrate + CoA + H(+). This protein is a Fe-Mo-cofactor biosynthetic component. This is Homocitrate synthase 1 (nifV1) from Nostoc sp. (strain PCC 7120 / SAG 25.82 / UTEX 2576).